We begin with the raw amino-acid sequence, 226 residues long: MRDFVTGTTVVSFRYRDGIIMGADTRGSYGRLAKLSGVQRIFKVGDQTLLGMSGEISDMQYLVKTLTILTQEDNRRIDPKGYHKMIQRILYSARSKISPLNLSVCVGGLNAASDGDRRTHTREKMLGCVNHLGNFYFSDVVCTGIGGYLVLPFLRNRVEGREEEIAREEAIGLVEEAMRILCYRDCNASNEIQVGYVDDQGVHISDPYQIKTNWDVGLREDEIVIE.

It belongs to the peptidase T1B family. The 26S proteasome consists of a 20S proteasome core and two 19S regulatory subunits. The 20S proteasome core is composed of 28 subunits that are arranged in four stacked rings, resulting in a barrel-shaped structure. The two end rings are each formed by seven alpha subunits, and the two central rings are each formed by seven beta subunits. The catalytic chamber with the active sites is on the inside of the barrel.

The protein localises to the cytoplasm. Its subcellular location is the nucleus. In terms of biological role, non-catalytic component of the proteasome which degrades poly-ubiquitinated proteins in the cytoplasm and in the nucleus. It is essential for the regulated turnover of proteins and for the removal of misfolded proteins. The proteasome is a multicatalytic proteinase complex that is characterized by its ability to cleave peptides with Arg, Phe, Tyr, Leu, and Glu adjacent to the leaving group at neutral or slightly basic pH. It has an ATP-dependent proteolytic activity. In Encephalitozoon cuniculi (strain GB-M1) (Microsporidian parasite), this protein is Probable proteasome subunit beta type-7 (PRE4).